A 191-amino-acid chain; its full sequence is UPF0312 protein Sputcn32_2702 (191 aa).

An N-terminal signal peptide occupies residues Met1–Ala22.

It belongs to the UPF0312 family. Type 1 subfamily.

The protein resides in the periplasm. In Shewanella putrefaciens (strain CN-32 / ATCC BAA-453), this protein is UPF0312 protein Sputcn32_2702.